Reading from the N-terminus, the 884-residue chain is Valine--tRNA ligase (884 aa).

The 'HIGH' region motif lies at 47–57 (PNVTGALHIGH). A 'KMSKS' region motif is present at residues 525 to 529 (KMSKS). Lys528 contributes to the ATP binding site. The stretch at 812 to 884 (AVDFEAELAR…QQRFRDAIGK (73 aa)) forms a coiled coil.

Belongs to the class-I aminoacyl-tRNA synthetase family. ValS type 1 subfamily. As to quaternary structure, monomer.

Its subcellular location is the cytoplasm. It catalyses the reaction tRNA(Val) + L-valine + ATP = L-valyl-tRNA(Val) + AMP + diphosphate. Its function is as follows. Catalyzes the attachment of valine to tRNA(Val). As ValRS can inadvertently accommodate and process structurally similar amino acids such as threonine, to avoid such errors, it has a 'posttransfer' editing activity that hydrolyzes mischarged Thr-tRNA(Val) in a tRNA-dependent manner. The protein is Valine--tRNA ligase of Nitratidesulfovibrio vulgaris (strain ATCC 29579 / DSM 644 / CCUG 34227 / NCIMB 8303 / VKM B-1760 / Hildenborough) (Desulfovibrio vulgaris).